The sequence spans 184 residues: ATP synthase subunit b, chloroplastic (184 aa).

The helical transmembrane segment at 27 to 49 threads the bilayer; sequence LATNPINLSVVLGVLIFFGKGVL.

This sequence belongs to the ATPase B chain family. In terms of assembly, F-type ATPases have 2 components, F(1) - the catalytic core - and F(0) - the membrane proton channel. F(1) has five subunits: alpha(3), beta(3), gamma(1), delta(1), epsilon(1). F(0) has four main subunits: a(1), b(1), b'(1) and c(10-14). The alpha and beta chains form an alternating ring which encloses part of the gamma chain. F(1) is attached to F(0) by a central stalk formed by the gamma and epsilon chains, while a peripheral stalk is formed by the delta, b and b' chains.

Its subcellular location is the plastid. It is found in the chloroplast thylakoid membrane. Its function is as follows. F(1)F(0) ATP synthase produces ATP from ADP in the presence of a proton or sodium gradient. F-type ATPases consist of two structural domains, F(1) containing the extramembraneous catalytic core and F(0) containing the membrane proton channel, linked together by a central stalk and a peripheral stalk. During catalysis, ATP synthesis in the catalytic domain of F(1) is coupled via a rotary mechanism of the central stalk subunits to proton translocation. Functionally, component of the F(0) channel, it forms part of the peripheral stalk, linking F(1) to F(0). The chain is ATP synthase subunit b, chloroplastic from Nicotiana sylvestris (Wood tobacco).